An 814-amino-acid polypeptide reads, in one-letter code: DNA ligase (814 aa).

NAD(+) is bound by residues 46–50, 95–96, and Glu-129; these read DAEYD and SL. Lys-131 functions as the N6-AMP-lysine intermediate in the catalytic mechanism. NAD(+)-binding residues include Arg-152, Glu-189, Lys-305, and Lys-329. Positions 434, 437, 458, and 464 each coordinate Zn(2+). The interval 526–549 is disordered; it reads SAQRRTEGEPAPKKPTKKKGEEED. A BRCT domain is found at 735-814; it reads TSAAAFAGKT…DDWLAMLAEA (80 aa).

This sequence belongs to the NAD-dependent DNA ligase family. LigA subfamily. Mg(2+) serves as cofactor. The cofactor is Mn(2+).

The catalysed reaction is NAD(+) + (deoxyribonucleotide)n-3'-hydroxyl + 5'-phospho-(deoxyribonucleotide)m = (deoxyribonucleotide)n+m + AMP + beta-nicotinamide D-nucleotide.. DNA ligase that catalyzes the formation of phosphodiester linkages between 5'-phosphoryl and 3'-hydroxyl groups in double-stranded DNA using NAD as a coenzyme and as the energy source for the reaction. It is essential for DNA replication and repair of damaged DNA. The chain is DNA ligase from Methylorubrum extorquens (strain CM4 / NCIMB 13688) (Methylobacterium extorquens).